A 278-amino-acid polypeptide reads, in one-letter code: 4-hydroxy-tetrahydrodipicolinate reductase (278 aa).

NAD(+) contacts are provided by residues 13 to 18 (GAAGKM) and 111 to 113 (GTT). The active-site Proton donor/acceptor is the H167. H168 provides a ligand contact to (S)-2,3,4,5-tetrahydrodipicolinate. The active-site Proton donor is K171. A (S)-2,3,4,5-tetrahydrodipicolinate-binding site is contributed by 177-178 (GT).

It belongs to the DapB family.

The protein resides in the cytoplasm. The enzyme catalyses (S)-2,3,4,5-tetrahydrodipicolinate + NAD(+) + H2O = (2S,4S)-4-hydroxy-2,3,4,5-tetrahydrodipicolinate + NADH + H(+). The catalysed reaction is (S)-2,3,4,5-tetrahydrodipicolinate + NADP(+) + H2O = (2S,4S)-4-hydroxy-2,3,4,5-tetrahydrodipicolinate + NADPH + H(+). Its pathway is amino-acid biosynthesis; L-lysine biosynthesis via DAP pathway; (S)-tetrahydrodipicolinate from L-aspartate: step 4/4. In terms of biological role, catalyzes the conversion of 4-hydroxy-tetrahydrodipicolinate (HTPA) to tetrahydrodipicolinate. The protein is 4-hydroxy-tetrahydrodipicolinate reductase of Mastigocladus laminosus (Fischerella sp.).